A 227-amino-acid chain; its full sequence is Uridylate kinase (227 aa).

Residue 11 to 12 coordinates ATP; sequence GS. Gly-45 serves as a coordination point for UMP. Residues Gly-46 and Arg-50 each coordinate ATP. UMP contacts are provided by residues Asp-67 and 114 to 120; that span reads TEPGHTT. ATP is bound by residues Thr-140, Tyr-146, and Asp-149.

Belongs to the UMP kinase family. As to quaternary structure, homohexamer.

Its subcellular location is the cytoplasm. It catalyses the reaction UMP + ATP = UDP + ADP. It functions in the pathway pyrimidine metabolism; CTP biosynthesis via de novo pathway; UDP from UMP (UMPK route): step 1/1. Inhibited by UTP. Functionally, catalyzes the reversible phosphorylation of UMP to UDP. The sequence is that of Uridylate kinase from Thermoplasma volcanium (strain ATCC 51530 / DSM 4299 / JCM 9571 / NBRC 15438 / GSS1).